The chain runs to 660 residues: Rhamnogalacturonate lyase B (660 aa).

The signal sequence occupies residues 1 to 18 (MRLGVCFSLAAAASVARA). Residues Asn25, Asn109, Asn142, and Asn284 are each glycosylated (N-linked (GlcNAc...) asparagine). Residues 446–466 (RLGTPDKSSGEFRHGAARDPT) form a disordered region. Residues 453-466 (SSGEFRHGAARDPT) show a composition bias toward basic and acidic residues. Asn524, Asn566, and Asn635 each carry an N-linked (GlcNAc...) asparagine glycan.

This sequence belongs to the polysaccharide lyase 4 family.

The protein localises to the secreted. It catalyses the reaction Endotype eliminative cleavage of L-alpha-rhamnopyranosyl-(1-&gt;4)-alpha-D-galactopyranosyluronic acid bonds of rhamnogalacturonan I domains in ramified hairy regions of pectin leaving L-rhamnopyranose at the reducing end and 4-deoxy-4,5-unsaturated D-galactopyranosyluronic acid at the non-reducing end.. In terms of biological role, pectinolytic enzymes consist of four classes of enzymes: pectin lyase, polygalacturonase, pectin methylesterase and rhamnogalacturonase. Degrades the rhamnogalacturonan I (RG-I) backbone of pectin. Active against linseed rhamnogalacturonan. This chain is Rhamnogalacturonate lyase B (rglB), found in Emericella nidulans (strain FGSC A4 / ATCC 38163 / CBS 112.46 / NRRL 194 / M139) (Aspergillus nidulans).